A 302-amino-acid polypeptide reads, in one-letter code: Syntaxin-17 (302 aa).

Residue Ser-2 is modified to N-acetylserine. Over 2-228 (SEDEEKVKLR…KNLGKAAKYK (227 aa)) the chain is Cytoplasmic. Lys-41 is modified (N6-acetyllysine). A coiled-coil region spans residues 53-123 (EEHINAGRTV…EELKKQFNDE (71 aa)). The residue at position 157 (Tyr-157) is a Phosphotyrosine; by ABL1. Residues 162–224 (IPRDQNAAES…EEGTKNLGKA (63 aa)) form the t-SNARE coiled-coil homology domain. The helical transmembrane segment at 229–249 (LAALPVAGALIGGVVGGPIGL) threads the bilayer. The segment at 229–275 (LAALPVAGALIGGVVGGPIGLLAGFKVAGIAAALGGGVLGFTGGKLI) is necessary and sufficient for localization to autophagosome. At 250–254 (LAGFK) the chain is on the lumenal side. The helical transmembrane segment at 255-275 (VAGIAAALGGGVLGFTGGKLI) threads the bilayer. Residues 276–302 (QRRKQKMMEKLASSCPDLPSQTDKKCS) lie on the Cytoplasmic side of the membrane. The residue at position 289 (Ser-289) is a Phosphoserine. An Endoplasmic reticulum retention signal motif is present at residues 299–302 (KKCS).

The protein belongs to the syntaxin family. As to quaternary structure, forms a SNARE complex composed of VAMP8, SNAP29 and STX17 involved in fusion of autophagosome with lysosome. May interact with VTI1B. Probably interacts with BET1, SCFD1 and SEC22B. Interacts with PTPN2 and ABL1; involved in STX17 phosphorylation. Interacts with COPB1. Interacts with TMED9 and TMED10; the interaction is direct. Interacts with VAMP7. Interacts with RUBCNL/PACER; promoting targeting of RUBCNL/PACER to autophagosome. Interacts with VAMP8, SNAP29, VPS39 and VPS41; these interactions are increased in the absence of TMEM39A. Interacts with IRGM; promoting STX17 recruitment to autophagosomes. Interacts with ATG8 proteins GABARAP and MAP1LC3B. Interacts with RNF115; this interaction enhances STX17 stability which in turn promotes autophagosome maturation. Interacts with RAB39A (GTP-bound); the interaction promotes autophagosome-lysosome membrane fusion driven by STX17-SNAP29-VAMP8. Interacts with RAB39B; the interaction may promote a different fonction in autophagy as compared with RAB39A. Phosphorylated at Tyr-157 probably by ABL1. Dephosphorylation by PTPN2; regulates exit from the endoplasmic reticulum.

The protein resides in the endoplasmic reticulum membrane. It is found in the smooth endoplasmic reticulum membrane. The protein localises to the endoplasmic reticulum-Golgi intermediate compartment membrane. It localises to the cytoplasmic vesicle. Its subcellular location is the autophagosome membrane. The protein resides in the COPII-coated vesicle membrane. It is found in the cytoplasm. The protein localises to the cytosol. It localises to the mitochondrion membrane. Its subcellular location is the autolysosome membrane. Functionally, SNAREs, soluble N-ethylmaleimide-sensitive factor-attachment protein receptors, are essential proteins for fusion of cellular membranes. SNAREs localized on opposing membranes assemble to form a trans-SNARE complex, an extended, parallel four alpha-helical bundle that drives membrane fusion. STX17 is a SNARE of the autophagosome involved in autophagy through the direct control of autophagosome membrane fusion with the lysosome membrane. May also play a role in the early secretory pathway where it may maintain the architecture of the endoplasmic reticulum-Golgi intermediate compartment/ERGIC and Golgi and/or regulate transport between the endoplasmic reticulum, the ERGIC and the Golgi. This Bos taurus (Bovine) protein is Syntaxin-17.